Here is a 440-residue protein sequence, read N- to C-terminus: Chromosome partition protein MukF (440 aa).

Positions 208–236 (LSETSGTLRELQDTLEAAGDKLQANLLRI) are leucine-zipper.

The protein belongs to the MukF family. Interacts, and probably forms a ternary complex, with MukE and MukB via its C-terminal region. The complex formation is stimulated by calcium or magnesium. It is required for an interaction between MukE and MukB.

The protein localises to the cytoplasm. The protein resides in the nucleoid. In terms of biological role, involved in chromosome condensation, segregation and cell cycle progression. May participate in facilitating chromosome segregation by condensation DNA from both sides of a centrally located replisome during cell division. Not required for mini-F plasmid partitioning. Probably acts via its interaction with MukB and MukE. Overexpression results in anucleate cells. It has a calcium binding activity. The protein is Chromosome partition protein MukF of Escherichia coli O9:H4 (strain HS).